A 251-amino-acid chain; its full sequence is 1-(5-phosphoribosyl)-5-[(5-phosphoribosylamino)methylideneamino] imidazole-4-carboxamide isomerase (251 aa).

Aspartate 8 serves as the catalytic Proton acceptor. Residue aspartate 131 is the Proton donor of the active site.

The protein belongs to the HisA/HisF family.

It is found in the cytoplasm. The catalysed reaction is 1-(5-phospho-beta-D-ribosyl)-5-[(5-phospho-beta-D-ribosylamino)methylideneamino]imidazole-4-carboxamide = 5-[(5-phospho-1-deoxy-D-ribulos-1-ylimino)methylamino]-1-(5-phospho-beta-D-ribosyl)imidazole-4-carboxamide. The protein operates within amino-acid biosynthesis; L-histidine biosynthesis; L-histidine from 5-phospho-alpha-D-ribose 1-diphosphate: step 4/9. The protein is 1-(5-phosphoribosyl)-5-[(5-phosphoribosylamino)methylideneamino] imidazole-4-carboxamide isomerase of Burkholderia cenocepacia (strain HI2424).